A 331-amino-acid polypeptide reads, in one-letter code: DNA fragmentation factor subunit alpha (331 aa).

Methionine 1 is subject to N-acetylmethionine. Residues 17 to 96 form the CIDE-N domain; the sequence is PLKPCLLRRN…ALACNEKWIY (80 aa). Threonine 243 is modified (phosphothreonine). Residues 306 to 331 form a disordered region; the sequence is LRNLSARRSPLPGEPQRPKRAKRDSS.

In terms of assembly, heterodimer of DFFA and DFFB. Caspase-3 cleaves DFF45 at 2 sites to generate an active factor.

The protein localises to the cytoplasm. In terms of biological role, inhibitor of the caspase-activated DNase (DFF40). This chain is DNA fragmentation factor subunit alpha (Dffa), found in Mus musculus (Mouse).